The chain runs to 254 residues: uncharacterized protein (254 aa).

It belongs to the nucleoside-specific channel-forming outer membrane porin (Tsx) (TC 1.B.10) family.

This is an uncharacterized protein from Escherichia coli (strain K12).